The primary structure comprises 88 residues: MHEVALSVLILLAGLSALDANDPEDKNSPFYYDWHSLRVGGLICAGTPCALGIIILLSGKCKCKFSQKPSHRPGDAPPLITPGSAHDC.

The N-terminal stretch at 1–17 (MHEVALSVLILLAGLSA) is a signal peptide. The Extracellular portion of the chain corresponds to 18–38 (LDANDPEDKNSPFYYDWHSLR). Residues 39-59 (VGGLICAGTPCALGIIILLSG) form a helical membrane-spanning segment. Residues 60-88 (KCKCKFSQKPSHRPGDAPPLITPGSAHDC) lie on the Cytoplasmic side of the membrane. The segment at 66–88 (SQKPSHRPGDAPPLITPGSAHDC) is disordered.

The protein belongs to the FXYD family. In terms of assembly, regulatory subunit of the sodium/potassium-transporting ATPase which is composed of a catalytic alpha subunit, a non-catalytic beta subunit and an additional regulatory subunit. Interacts with catalytic alpha subunit ATP1A1. Also interacts with non-catalytic beta subunit ATP1B1. Interacts with the alpha1-beta1, alpha2-beta1 and alpha3-beta1 NKA isozymes. Post-translationally, glutathionylated.

The protein localises to the cell membrane. In terms of biological role, associates with and regulates the activity of the sodium/potassium-transporting ATPase (NKA) which transports Na(+) out of the cell and K(+) into the cell. Reduces glutathionylation of the NKA beta-1 subunit ATP1B1, thus reversing glutathionylation-mediated inhibition of ATP1B1. Induces a hyperpolarization-activated chloride current when expressed in Xenopus oocytes. This chain is FXYD domain-containing ion transport regulator 3 (FXYD3), found in Sus scrofa (Pig).